The chain runs to 100 residues: Glutamyl-tRNA(Gln) amidotransferase subunit C (100 aa).

Belongs to the GatC family. In terms of assembly, heterotrimer of A, B and C subunits.

It catalyses the reaction L-glutamyl-tRNA(Gln) + L-glutamine + ATP + H2O = L-glutaminyl-tRNA(Gln) + L-glutamate + ADP + phosphate + H(+). It carries out the reaction L-aspartyl-tRNA(Asn) + L-glutamine + ATP + H2O = L-asparaginyl-tRNA(Asn) + L-glutamate + ADP + phosphate + 2 H(+). Functionally, allows the formation of correctly charged Asn-tRNA(Asn) or Gln-tRNA(Gln) through the transamidation of misacylated Asp-tRNA(Asn) or Glu-tRNA(Gln) in organisms which lack either or both of asparaginyl-tRNA or glutaminyl-tRNA synthetases. The reaction takes place in the presence of glutamine and ATP through an activated phospho-Asp-tRNA(Asn) or phospho-Glu-tRNA(Gln). This Streptococcus pyogenes serotype M1 protein is Glutamyl-tRNA(Gln) amidotransferase subunit C.